Reading from the N-terminus, the 350-residue chain is MAQQAPDREKALELALAQIDKNFGKGSVMRLGEDVRPPIAVIPTGSIALDVALGIGGLPRGRVIEIYGPESSGKTTVALHAVANAQAAGGIAAFIDAEHALDPDYAKKLGVDTDALLVSQPDTGEQALEIADMLIRSGALDILVIDSVAALVPRAEIEGEMGDSHVGLQARLMSQALRKMTGALNNSGTTAIFINQLREKIGVMFGSPETTTGGKALKFYSSVRLDVRRIETLKDGTDAVGNRTRVKVVKNKVSPPFKQAEFDILYGKGISREGSLIDMGVEQGFIRKSGSWFTYDGEQLGQGKENARNFLLQNPDVGNEIEKKIKEKLGIGAQLTDDVADDALPAPVDF.

68–75 (GPESSGKT) serves as a coordination point for ATP.

It belongs to the RecA family.

The protein resides in the cytoplasm. In terms of biological role, can catalyze the hydrolysis of ATP in the presence of single-stranded DNA, the ATP-dependent uptake of single-stranded DNA by duplex DNA, and the ATP-dependent hybridization of homologous single-stranded DNAs. It interacts with LexA causing its activation and leading to its autocatalytic cleavage. The protein is Protein RecA of Mycolicibacterium gilvum (strain PYR-GCK) (Mycobacterium gilvum (strain PYR-GCK)).